The chain runs to 333 residues: L-lactate dehydrogenase B chain (333 aa).

NAD(+) is bound by residues 29–57 (GQVG…LEDK) and arginine 99. Substrate-binding residues include arginine 106, asparagine 138, and arginine 169. Asparagine 138 is an NAD(+) binding site. Histidine 193 serves as the catalytic Proton acceptor. Threonine 248 contacts substrate.

Belongs to the LDH/MDH superfamily. LDH family. Homotetramer.

It is found in the cytoplasm. It carries out the reaction (S)-lactate + NAD(+) = pyruvate + NADH + H(+). It participates in fermentation; pyruvate fermentation to lactate; (S)-lactate from pyruvate: step 1/1. Interconverts simultaneously and stereospecifically pyruvate and lactate with concomitant interconversion of NADH and NAD(+). The sequence is that of L-lactate dehydrogenase B chain (LDHB) from Anas platyrhynchos (Mallard).